Reading from the N-terminus, the 151-residue chain is US8.5 protein (151 aa).

The tract at residues 27-107 (SSQPLDPEGP…APSPHPRPPG (81 aa)) is disordered. Positions 80–91 (SDERGPPRHDRP) are enriched in basic and acidic residues.

It localises to the host nucleus. The protein resides in the host nucleolus. This Human herpesvirus 1 (strain F) (HHV-1) protein is US8.5 protein (US8.5).